Reading from the N-terminus, the 420-residue chain is Pyrophosphate--fructose 6-phosphate 1-phosphotransferase (420 aa).

Gly-13 lines the diphosphate pocket. Substrate-binding positions include 142-144, 190-192, Glu-247, and 297-300; these read TVD, MGR, and YLQR. The active-site Proton acceptor is the Asp-144.

This sequence belongs to the phosphofructokinase type A (PFKA) family. PPi-dependent PFK group II subfamily. Clade 'B2' sub-subfamily. In terms of assembly, homodimer. Requires Mg(2+) as cofactor. Co(2+) serves as cofactor. It depends on Mn(2+) as a cofactor.

The protein localises to the cytoplasm. The enzyme catalyses beta-D-fructose 6-phosphate + diphosphate = beta-D-fructose 1,6-bisphosphate + phosphate + H(+). It functions in the pathway carbohydrate degradation; glycolysis; D-glyceraldehyde 3-phosphate and glycerone phosphate from D-glucose: step 3/4. Non-allosteric. Its function is as follows. Catalyzes the phosphorylation of D-fructose 6-phosphate, the first committing step of glycolysis. Uses inorganic phosphate (PPi) as phosphoryl donor instead of ATP like common ATP-dependent phosphofructokinases (ATP-PFKs), which renders the reaction reversible, and can thus function both in glycolysis and gluconeogenesis. Consistently, PPi-PFK can replace the enzymes of both the forward (ATP-PFK) and reverse (fructose-bisphosphatase (FBPase)) reactions. The protein is Pyrophosphate--fructose 6-phosphate 1-phosphotransferase of Methylococcus capsulatus (strain ATCC 33009 / NCIMB 11132 / Bath).